Reading from the N-terminus, the 357-residue chain is DnaJ homolog subfamily C member 25 (357 aa).

The helical transmembrane segment at 19-39 threads the bilayer; the sequence is WLLLAPLLLVPLLARPAEALV. One can recognise a J domain in the interval 48–121; sequence DCYEVLGVSR…ETRKDYDYML (74 aa). Transmembrane regions (helical) follow at residues 147 to 167 and 241 to 261; these read VVIL…WWNS and LLLF…AWYC.

This sequence belongs to the DNAJC25 family.

It is found in the membrane. In Mus musculus (Mouse), this protein is DnaJ homolog subfamily C member 25 (Dnajc25).